The chain runs to 344 residues: MIKILGIESSCDDTAVSIITENREILSNIIISQNTEHAVFGGVVPEIAARSHLSHLDKALKNVLKESNTKLTDISTIAATSGPGLIGGVIVGSMFARSLSSALKKPFIAINHLEGHALTARLTDNIPYPYLLLLASGGHCQFVAVLGLGKYKILGSTIDDAVGEAFDKVAKMLNLAFPGGPEIEKRAKLGDPHKYKFPKPIINSGNCNMSFSGLKTAVRTLIMNLKEINDTVINDIAASFQFTIGEILSSKVQDAIRAYEQITNNFDKKNIVIAGGVAANKYLQKILSSCAKTYGYRLIYPPIHLCTDNAAMIAYAGLERYNNKLFTPLNFSPKARWSLEDISN.

Positions 112 and 116 each coordinate Fe cation. Substrate contacts are provided by residues 134 to 138 (LASGG), Asp167, Gly180, and Asn280. Asp308 is a binding site for Fe cation.

The protein belongs to the KAE1 / TsaD family. It depends on Fe(2+) as a cofactor.

The protein localises to the cytoplasm. The catalysed reaction is L-threonylcarbamoyladenylate + adenosine(37) in tRNA = N(6)-L-threonylcarbamoyladenosine(37) in tRNA + AMP + H(+). In terms of biological role, required for the formation of a threonylcarbamoyl group on adenosine at position 37 (t(6)A37) in tRNAs that read codons beginning with adenine. Is involved in the transfer of the threonylcarbamoyl moiety of threonylcarbamoyl-AMP (TC-AMP) to the N6 group of A37, together with TsaE and TsaB. TsaD likely plays a direct catalytic role in this reaction. The polypeptide is tRNA N6-adenosine threonylcarbamoyltransferase (Rickettsia rickettsii (strain Iowa)).